A 215-amino-acid polypeptide reads, in one-letter code: uncharacterized protein (215 aa).

Disordered stretches follow at residues 1–144 (MPKG…PYLR) and 156–215 (IQGH…GAPA). Low complexity-rich tracts occupy residues 16-29 (ASTP…ASPT), 49-58 (SSSWPKSPIK), 85-96 (SGSSSPGPSSSR), and 104-127 (STAA…RAAP).

This is an uncharacterized protein from Homo sapiens (Human).